The sequence spans 388 residues: Succinate--CoA ligase [ADP-forming] subunit beta (388 aa).

The ATP-grasp domain maps to 9–244 (KEILRKFGVA…PDEEDPKETQ (236 aa)). ATP is bound by residues lysine 46, 53–55 (GRG), glutamate 99, cysteine 102, and glutamate 107. Mg(2+)-binding residues include asparagine 199 and aspartate 213. Residues asparagine 264 and 321–323 (GIM) each bind substrate.

It belongs to the succinate/malate CoA ligase beta subunit family. As to quaternary structure, heterotetramer of two alpha and two beta subunits. Mg(2+) serves as cofactor.

It carries out the reaction succinate + ATP + CoA = succinyl-CoA + ADP + phosphate. The catalysed reaction is GTP + succinate + CoA = succinyl-CoA + GDP + phosphate. Its pathway is carbohydrate metabolism; tricarboxylic acid cycle; succinate from succinyl-CoA (ligase route): step 1/1. In terms of biological role, succinyl-CoA synthetase functions in the citric acid cycle (TCA), coupling the hydrolysis of succinyl-CoA to the synthesis of either ATP or GTP and thus represents the only step of substrate-level phosphorylation in the TCA. The beta subunit provides nucleotide specificity of the enzyme and binds the substrate succinate, while the binding sites for coenzyme A and phosphate are found in the alpha subunit. The chain is Succinate--CoA ligase [ADP-forming] subunit beta from Anaeromyxobacter dehalogenans (strain 2CP-C).